Reading from the N-terminus, the 356-residue chain is tRNA N6-adenosine threonylcarbamoyltransferase (356 aa).

The a divalent metal cation site is built by H124, H128, and Y145. Substrate contacts are provided by residues 145–149 (YVSGG), D177, G192, E196, and N287. D315 is a binding site for a divalent metal cation.

This sequence belongs to the KAE1 / TsaD family. As to quaternary structure, component of the EKC/KEOPS complex composed of at least BUD32, CGI121, GON7, KAE1 and PCC1; the whole complex dimerizes. Requires a divalent metal cation as cofactor.

It is found in the cytoplasm. It localises to the nucleus. It catalyses the reaction L-threonylcarbamoyladenylate + adenosine(37) in tRNA = N(6)-L-threonylcarbamoyladenosine(37) in tRNA + AMP + H(+). Component of the EKC/KEOPS complex that is required for the formation of a threonylcarbamoyl group on adenosine at position 37 (t(6)A37) in tRNAs that read codons beginning with adenine. The complex is probably involved in the transfer of the threonylcarbamoyl moiety of threonylcarbamoyl-AMP (TC-AMP) to the N6 group of A37. KAE1 likely plays a direct catalytic role in this reaction, but requires other protein(s) of the complex to fulfill this activity. The EKC/KEOPS complex also promotes both telomere uncapping and telomere elongation. The complex is required for efficient recruitment of transcriptional coactivators. The protein is tRNA N6-adenosine threonylcarbamoyltransferase of Yarrowia lipolytica (strain CLIB 122 / E 150) (Yeast).